The primary structure comprises 329 residues: DNA-directed RNA polymerase subunit alpha (329 aa).

The alpha N-terminal domain (alpha-NTD) stretch occupies residues 1–235 (MQGSVTEFLK…EQLDAFVDLR (235 aa)). Residues 249–329 (FDPILLRPVD…NWPPASIAED (81 aa)) are alpha C-terminal domain (alpha-CTD).

The protein belongs to the RNA polymerase alpha chain family. As to quaternary structure, homodimer. The RNAP catalytic core consists of 2 alpha, 1 beta, 1 beta' and 1 omega subunit. When a sigma factor is associated with the core the holoenzyme is formed, which can initiate transcription.

The enzyme catalyses RNA(n) + a ribonucleoside 5'-triphosphate = RNA(n+1) + diphosphate. Functionally, DNA-dependent RNA polymerase catalyzes the transcription of DNA into RNA using the four ribonucleoside triphosphates as substrates. In Pasteurella multocida (strain Pm70), this protein is DNA-directed RNA polymerase subunit alpha.